A 291-amino-acid chain; its full sequence is Taste receptor type 2 member 16 (291 aa).

Residue Met-1 is a topological domain, extracellular. A helical transmembrane segment spans residues 2-22 (IPIQLTVFFMIIYVLESLTII). Residues 23 to 41 (VQSSLIVAVLGREWLQVRR) are Cytoplasmic-facing. Residues 42–62 (LMPVDMILISLGISRFCLQWA) form a helical membrane-spanning segment. The Extracellular segment spans residues 63–84 (SMLNNFCSYFNLNYVLCNLTIT). Asn-80 is a glycosylation site (N-linked (GlcNAc...) asparagine). The chain crosses the membrane as a helical span at residues 85–105 (WEFFNILTFWLNSLLTVFYCI). Residues 106-125 (KVSSFTHHIFLWLRWRILRL) are Cytoplasmic-facing. Residues 126 to 146 (FPWILLGSLMITCVTIIPSAI) form a helical membrane-spanning segment. The Extracellular portion of the chain corresponds to 147-182 (GNYIQIQLLTMEHLPRNSTVTDKLEKFHQYQFQAHT). Asn-163 is a glycosylation site (N-linked (GlcNAc...) asparagine). Residues 183-203 (VALVIPFILFLASTILLMASL) form a helical membrane-spanning segment. Over 204-228 (TKQIQHHSTGHCNPSMKAHFTALRS) the chain is Cytoplasmic. A helical membrane pass occupies residues 229–249 (LAVLFIVFTSYFLTILITIIG). At 250–257 (TLFDKRCW) the chain is on the extracellular side. The chain crosses the membrane as a helical span at residues 258 to 278 (LWVWEAFVYAFILMHSTSLML). The Cytoplasmic segment spans residues 279–291 (SSPTLKRILKGKC).

Belongs to the G-protein coupled receptor T2R family. As to quaternary structure, interacts with RTP3 and RTP4.

Its subcellular location is the cell membrane. In terms of biological role, receptor that may play a role in the perception of bitterness and is gustducin-linked. May play a role in sensing the chemical composition of the gastrointestinal content. The activity of this receptor may stimulate alpha gustducin, mediate PLC-beta-2 activation and lead to the gating of TRPM5. This chain is Taste receptor type 2 member 16 (TAS2R16), found in Pan troglodytes (Chimpanzee).